A 505-amino-acid chain; its full sequence is RNA-splicing ligase RtcB homolog (505 aa).

Residues aspartate 119, cysteine 122, histidine 227, histidine 259, and histidine 353 each coordinate Mn(2+). Position 226 to 230 (226 to 230 (NHYAE)) interacts with GMP. GMP is bound by residues 353-354 (HN), 402-405 (GGTM), serine 409, 428-431 (HGAG), and lysine 504. Catalysis depends on histidine 428, which acts as the GMP-histidine intermediate.

The protein belongs to the RtcB family. In terms of assembly, catalytic component of the tRNA-splicing ligase complex. Requires Mn(2+) as cofactor.

It localises to the nucleus. The protein resides in the cytoplasm. It catalyses the reaction a 3'-end 3'-phospho-ribonucleotide-RNA + a 5'-end dephospho-ribonucleoside-RNA + GTP = a ribonucleotidyl-ribonucleotide-RNA + GMP + diphosphate. The enzyme catalyses a 3'-end 2',3'-cyclophospho-ribonucleotide-RNA + a 5'-end dephospho-ribonucleoside-RNA + GTP + H2O = a ribonucleotidyl-ribonucleotide-RNA + GMP + diphosphate + H(+). In terms of biological role, catalytic subunit of the tRNA-splicing ligase complex that acts by directly joining spliced tRNA halves to mature-sized tRNAs by incorporating the precursor-derived splice junction phosphate into the mature tRNA as a canonical 3',5'-phosphodiester. May act as an RNA ligase with broad substrate specificity, and may function toward other RNAs. The protein is RNA-splicing ligase RtcB homolog of Danio rerio (Zebrafish).